The primary structure comprises 121 residues: Small ribosomal subunit protein uS13 (121 aa).

The disordered stretch occupies residues 90–121 (RHRRGLPVRGQHTKNNARTRKGKKVSIAGRKK).

The protein belongs to the universal ribosomal protein uS13 family. As to quaternary structure, part of the 30S ribosomal subunit. Forms a loose heterodimer with protein S19. Forms two bridges to the 50S subunit in the 70S ribosome.

Located at the top of the head of the 30S subunit, it contacts several helices of the 16S rRNA. In the 70S ribosome it contacts the 23S rRNA (bridge B1a) and protein L5 of the 50S subunit (bridge B1b), connecting the 2 subunits; these bridges are implicated in subunit movement. Contacts the tRNAs in the A and P-sites. This is Small ribosomal subunit protein uS13 from Lactiplantibacillus plantarum (strain ATCC BAA-793 / NCIMB 8826 / WCFS1) (Lactobacillus plantarum).